The following is a 110-amino-acid chain: Mitochondrial pyruvate carrier 1 (110 aa).

The next 2 helical transmembrane spans lie at 20 to 36 and 44 to 61; these read HFWG…AGLV and MISG…ALFM.

It belongs to the mitochondrial pyruvate carrier (MPC) (TC 2.A.105) family.

It localises to the mitochondrion inner membrane. Functionally, mediates the uptake of pyruvate into mitochondria. The protein is Mitochondrial pyruvate carrier 1 of Arabidopsis thaliana (Mouse-ear cress).